The primary structure comprises 465 residues: Beta-1,2-xylosyltransferase XYXT1 (465 aa).

The Cytoplasmic portion of the chain corresponds to Met-1–Lys-11. A helical; Signal-anchor for type II membrane protein membrane pass occupies residues Gly-12 to Tyr-32. Residues Ser-33–Arg-465 lie on the Lumenal side of the membrane. Residues Asn-80, Asn-118, Asn-125, Asn-266, and Asn-403 are each glycosylated (N-linked (GlcNAc...) asparagine).

Belongs to the glycosyltransferase 61 family. Widely expressed.

It localises to the golgi apparatus membrane. It functions in the pathway glycan metabolism. In terms of biological role, glycosyltransferase involved in the xylosylation of xylan, the major hemicellulose (non-cellulosic component) of primary and secondary walls of angiosperms. Possesses beta-1,2-xylosyltransferase activity, transferring xylose from UDP-xylose to the xylan backbone. Catalyzes the addition of 2-O-xylosyl side chains to the xylan backbone. The sequence is that of Beta-1,2-xylosyltransferase XYXT1 from Oryza sativa subsp. japonica (Rice).